The chain runs to 318 residues: Beta-ketoacyl-[acyl-carrier-protein] synthase III (318 aa).

Catalysis depends on residues Cys-112 and His-245. The tract at residues 246–250 is ACP-binding; sequence QANIR. Residue Asn-275 is part of the active site.

It belongs to the thiolase-like superfamily. FabH family. As to quaternary structure, homodimer.

It is found in the cytoplasm. The enzyme catalyses malonyl-[ACP] + acetyl-CoA + H(+) = 3-oxobutanoyl-[ACP] + CO2 + CoA. The protein operates within lipid metabolism; fatty acid biosynthesis. In terms of biological role, catalyzes the condensation reaction of fatty acid synthesis by the addition to an acyl acceptor of two carbons from malonyl-ACP. Catalyzes the first condensation reaction which initiates fatty acid synthesis and may therefore play a role in governing the total rate of fatty acid production. Possesses both acetoacetyl-ACP synthase and acetyl transacylase activities. Its substrate specificity determines the biosynthesis of branched-chain and/or straight-chain of fatty acids. This Rickettsia conorii (strain ATCC VR-613 / Malish 7) protein is Beta-ketoacyl-[acyl-carrier-protein] synthase III.